Reading from the N-terminus, the 907-residue chain is Chloride channel protein 2 (907 aa).

Over 1-93 (MAAATAAAAT…RCHKFLVSRV (93 aa)) the chain is Cytoplasmic. The segment at 22–40 (QYEQTLMYGRYTQELGAFA) is essential for channel gating by both voltage and cell volume. Thr26 bears the Phosphothreonine mark. The tract at residues 42–55 (EEAARIRLGGPEPW) is modulates channel gating by both voltage and cell volume. Transmembrane regions (helical) follow at residues 94–127 (GEDWIFLVLLGLLMALVSWAMDYAIAVCLQAQQW) and 136–161 (ILLQYLAWVTYPVVLITFSAGFTQIL). The Selectivity filter part_1 motif lies at 167–171 (GSGIP). The helical intramembrane region spans 170-177 (IPEMKTIL). 2 helical membrane passes run 186 to 204 (LTLKTFVAKVIGLTCALGS) and 211 to 229 (EGPFVHIASMCAALLSKFL). Residues 209-213 (GKEGP) carry the Selectivity filter part_2 motif. 2 consecutive intramembrane regions (helical) follow at residues 245–257 (MLAAACAVGVGCC) and 261–269 (PIGGVLFSI). Transmembrane regions (helical) follow at residues 281–301 (YWRGFFAATFSAFIFRVLAVW), 327–355 (LPAFAVIGIASGFGGALFVYLNRKIVQVM), 364–383 (FLMKKRLLFPALVTLLISTL), 435–455 (ANVFLTLVIFILMKFWMSALA), and 463–486 (GAFMPVFVIGAAFGRLVGESMAAW). Positions 463–467 (GAFMP) match the Selectivity filter part_3 motif. Residues 503-517 (GGYAVVGAAALAGAV) constitute an intramembrane region (helical). Residues 518–519 (TH) constitute an intramembrane region (note=Loop between two helices). Positions 520-531 (TVSTAVIVFELT) form an intramembrane region, helical. The segment at residues 532–536 (GQIAH) is an intramembrane region (note=Loop between two helices). Residues 537–554 (ILPVMIAVILANAVAQSL) traverse the membrane as a helical segment. Residues 555 to 907 (QPSLYDSIIR…TPSDSDDKCQ (353 aa)) lie on the Cytoplasmic side of the membrane. Residues 590 to 648 (MVRDVPHVALSCTFRDLRLALHRTKGRMLALVESPESMILLGSIERSQVVALLGAQLSP) enclose the CBS 1 domain. The span at 650–660 (RRRQHMQKLRK) shows a compositional bias: basic residues. A disordered region spans residues 650–720 (RRRQHMQKLR…NATSLQEGTT (71 aa)). Over residues 664–678 (SPPSDQESPPSSETS) the composition is skewed to low complexity. Basic residues predominate over residues 696-705 (QTHKPLKPAL). Residues 710 to 720 (SNATSLQEGTT) show a composition bias toward polar residues. Ser767 is modified (phosphoserine). Positions 799–859 (IDPAPFQLVE…GSVTAQGVKV (61 aa)) constitute a CBS 2 domain. The short motif at 821–822 (LL) is the Basolateral membrane sorting element. Residues 865–907 (SFRDSATSSSDTETTEVHALWGPRSRHGLPREGTPSDSDDKCQ) form a disordered region.

Belongs to the chloride channel (TC 2.A.49) family. ClC-2/CLCN2 subfamily. As to quaternary structure, homodimer. Interacts with auxiliary subunit HEPACAM. Post-translationally, phosphorylated. Activated by dephosphorylation. Ubiquitously expressed. Expressed in neurons and glial cells (at protein level).

The protein resides in the cell membrane. Its subcellular location is the basolateral cell membrane. It localises to the cell projection. The protein localises to the dendritic spine membrane. It is found in the axon. It catalyses the reaction chloride(in) = chloride(out). It carries out the reaction thiocyanate(in) = thiocyanate(out). The enzyme catalyses bromide(in) = bromide(out). The catalysed reaction is nitrate(in) = nitrate(out). It catalyses the reaction iodide(out) = iodide(in). Common gate kinetics are down-regulated by intracellular ATP. Inhibited by AK-42, a derivative of meclofenamate. Inhibited by Cd(2+). Inhibited by Zn(2+) and PKC activation. Inhibited at acidic pH. CCLN2:HEPACAM channel conductance is up-regulated upon hypo-osmolarity. Voltage-gated and osmosensitive chloride channel. Forms a homodimeric channel where each subunit has its own ion conduction pathway. Conducts double-barreled currents controlled by two types of gates, two fast glutamate gates that control each subunit independently and a slow common gate that opens and shuts off both subunits simultaneously. Displays inward rectification currents activated upon membrane hyperpolarization and extracellular hypotonicity. Contributes to chloride conductance involved in neuron excitability. In hippocampal neurons, generates a significant part of resting membrane conductance and provides an additional chloride efflux pathway to prevent chloride accumulation in dendrites upon GABA receptor activation. In glia, associates with the auxiliary subunit HEPACAM/GlialCAM at astrocytic processes and myelinated fiber tracts where it may regulate transcellular chloride flux buffering extracellular chloride and potassium concentrations. Regulates aldosterone production in adrenal glands. The opening of CLCN2 channels at hyperpolarized membrane potentials in the glomerulosa causes cell membrane depolarization, activation of voltage-gated calcium channels and increased expression of aldosterone synthase, the rate-limiting enzyme for aldosterone biosynthesis. Contributes to chloride conductance in retinal pigment epithelium involved in phagocytosis of shed photoreceptor outer segments and photoreceptor renewal. Conducts chloride currents at the basolateral membrane of epithelial cells with a role in chloride reabsorption rather than secretion. Permeable to small monovalent anions with chloride &gt; thiocyanate &gt; bromide &gt; nitrate &gt; iodide ion selectivity. This chain is Chloride channel protein 2 (Clcn2), found in Rattus norvegicus (Rat).